A 184-amino-acid polypeptide reads, in one-letter code: Succinate dehydrogenase cytochrome b560 subunit, mitochondrial (184 aa).

A helical membrane pass occupies residues 65–94; sequence LTWMLSGFHRISGCVMAGTLLVGGLGFAVL. Topologically, residues 95-114 are mitochondrial intermembrane; sequence PLDFTTFVEYIRGWNLPCAV. Residues 115-139 traverse the membrane as a helical segment; the sequence is TAVFKYIIAFPIIFHTLNGIRFLGF. H129 contributes to the heme binding site. Over 140–147 the chain is Mitochondrial matrix; the sequence is DLAKGVDN. A helical transmembrane segment spans residues 148-169; the sequence is IGQVYKSGWLVFGVSAVIALAI. The Mitochondrial intermembrane portion of the chain corresponds to 170 to 172; that stretch reads VIN.

It belongs to the cytochrome b560 family. Component of complex II composed of four subunits: a flavoprotein (FP), iron-sulfur protein (IP), and a cytochrome b560 composed of two transmembrane proteins. Requires heme as cofactor.

It is found in the mitochondrion inner membrane. It participates in carbohydrate metabolism; tricarboxylic acid cycle. Its function is as follows. Membrane-anchoring subunit of succinate dehydrogenase (SDH) that is involved in complex II of the mitochondrial electron transport chain and is responsible for transferring electrons from succinate to ubiquinone (coenzyme Q). Mediates resistance to enteropathogenic E.coli infection. The polypeptide is Succinate dehydrogenase cytochrome b560 subunit, mitochondrial (mev-1) (Caenorhabditis briggsae).